A 353-amino-acid polypeptide reads, in one-letter code: GTPase Obg (353 aa).

In terms of domain architecture, Obg spans Met1–Leu159. Residues Ala160–Glu332 form the OBG-type G domain. GTP-binding positions include Gly166 to Ser173, Phe191 to His195, Asp213 to Gly216, Asn284 to Asp287, and Ser313 to Leu315. Positions 173 and 193 each coordinate Mg(2+).

It belongs to the TRAFAC class OBG-HflX-like GTPase superfamily. OBG GTPase family. As to quaternary structure, monomer. Mg(2+) is required as a cofactor.

Its subcellular location is the cytoplasm. Its function is as follows. An essential GTPase which binds GTP, GDP and possibly (p)ppGpp with moderate affinity, with high nucleotide exchange rates and a fairly low GTP hydrolysis rate. Plays a role in control of the cell cycle, stress response, ribosome biogenesis and in those bacteria that undergo differentiation, in morphogenesis control. This chain is GTPase Obg, found in Methylobacillus flagellatus (strain ATCC 51484 / DSM 6875 / VKM B-1610 / KT).